Consider the following 215-residue polypeptide: uncharacterized protein (215 aa).

Residues Gly53, Glu74, and Asp97 each contribute to the S-adenosyl-L-methionine site.

It belongs to the methyltransferase superfamily. YrrT family.

In terms of biological role, could be a S-adenosyl-L-methionine-dependent methyltransferase. This is an uncharacterized protein from Geobacillus kaustophilus (strain HTA426).